The following is a 138-amino-acid chain: Class I hydrophobin 3 (138 aa).

The signal sequence occupies residues 1-16; that stretch reads MRFFLAITALVAAVTA. Cystine bridges form between cysteine 40–cysteine 111, cysteine 48–cysteine 105, cysteine 49–cysteine 87, and cysteine 112–cysteine 130.

The protein belongs to the fungal hydrophobin family. Self-assembles to form functional amyloid fibrils called rodlets. Self-assembly into fibrillar rodlets occurs spontaneously at hydrophobic:hydrophilic interfaces and the rodlets further associate laterally to form amphipathic monolayers.

Its subcellular location is the secreted. The protein localises to the cell wall. Aerial growth, conidiation, and dispersal of filamentous fungi in the environment rely upon a capability of their secreting small amphipathic proteins called hydrophobins (HPBs) with low sequence identity. Class I can self-assemble into an outermost layer of rodlet bundles on aerial cell surfaces, conferring cellular hydrophobicity that supports fungal growth, development and dispersal; whereas Class II form highly ordered films at water-air interfaces through intermolecular interactions but contribute nothing to the rodlet structure. HYD3 is a class I hydrophobin that contributes to the formation of aerial hyphae and fruiting bodies. The chain is Class I hydrophobin 3 from Cordyceps militaris (Caterpillar fungus).